Here is a 101-residue protein sequence, read N- to C-terminus: Small ribosomal subunit protein uS14 (101 aa).

A disordered region spans residues 49–70; it reads QSLPRDSSPSRQRNRCNQTGRP. Over residues 52-68 the composition is skewed to polar residues; the sequence is PRDSSPSRQRNRCNQTG.

It belongs to the universal ribosomal protein uS14 family. As to quaternary structure, part of the 30S ribosomal subunit. Contacts proteins S3 and S10.

Its function is as follows. Binds 16S rRNA, required for the assembly of 30S particles and may also be responsible for determining the conformation of the 16S rRNA at the A site. The chain is Small ribosomal subunit protein uS14 from Yersinia pseudotuberculosis serotype O:1b (strain IP 31758).